The following is a 130-amino-acid chain: KVFERCELARTLKRFGMDGFRGISLANWMCLARWESSYNTQATNYNSGDRSTDYGIFQINSHWWCNDGKTPGAVNACHIPCSALLQDDITQAVACAKRVVSDPQGIRAWVAWRSHCQNQDLTSYIQGCGV.

The C-type lysozyme domain maps to 1-130; the sequence is KVFERCELAR…LTSYIQGCGV (130 aa). Intrachain disulfides connect C6/C128, C30/C116, C65/C81, and C77/C95. Residues E35 and D53 contribute to the active site.

This sequence belongs to the glycosyl hydrolase 22 family. In terms of assembly, monomer.

The protein resides in the secreted. The catalysed reaction is Hydrolysis of (1-&gt;4)-beta-linkages between N-acetylmuramic acid and N-acetyl-D-glucosamine residues in a peptidoglycan and between N-acetyl-D-glucosamine residues in chitodextrins.. In terms of biological role, lysozymes have primarily a bacteriolytic function; those in tissues and body fluids are associated with the monocyte-macrophage system and enhance the activity of immunoagents. This chain is Lysozyme C, kidney isozyme, found in Ovis aries (Sheep).